The following is a 617-amino-acid chain: Chaperone protein HscA homolog (617 aa).

It belongs to the heat shock protein 70 family.

In terms of biological role, chaperone involved in the maturation of iron-sulfur cluster-containing proteins. Has a low intrinsic ATPase activity which is markedly stimulated by HscB. The chain is Chaperone protein HscA homolog from Photobacterium profundum (strain SS9).